A 227-amino-acid polypeptide reads, in one-letter code: Enolase-phosphatase E1 (227 aa).

It belongs to the HAD-like hydrolase superfamily. MasA/MtnC family. In terms of assembly, monomer. Mg(2+) serves as cofactor.

The enzyme catalyses 5-methylsulfanyl-2,3-dioxopentyl phosphate + H2O = 1,2-dihydroxy-5-(methylsulfanyl)pent-1-en-3-one + phosphate. Its pathway is amino-acid biosynthesis; L-methionine biosynthesis via salvage pathway; L-methionine from S-methyl-5-thio-alpha-D-ribose 1-phosphate: step 3/6. It functions in the pathway amino-acid biosynthesis; L-methionine biosynthesis via salvage pathway; L-methionine from S-methyl-5-thio-alpha-D-ribose 1-phosphate: step 4/6. Functionally, bifunctional enzyme that catalyzes the enolization of 2,3-diketo-5-methylthiopentyl-1-phosphate (DK-MTP-1-P) into the intermediate 2-hydroxy-3-keto-5-methylthiopentenyl-1-phosphate (HK-MTPenyl-1-P), which is then dephosphorylated to form the acireductone 1,2-dihydroxy-3-keto-5-methylthiopentene (DHK-MTPene). The chain is Enolase-phosphatase E1 from Gluconobacter oxydans (strain 621H) (Gluconobacter suboxydans).